A 168-amino-acid chain; its full sequence is Endoribonuclease YbeY (168 aa).

Zn(2+)-binding residues include His132, His136, and His142.

The protein belongs to the endoribonuclease YbeY family. It depends on Zn(2+) as a cofactor.

The protein localises to the cytoplasm. Functionally, single strand-specific metallo-endoribonuclease involved in late-stage 70S ribosome quality control and in maturation of the 3' terminus of the 16S rRNA. The protein is Endoribonuclease YbeY of Clostridium perfringens (strain ATCC 13124 / DSM 756 / JCM 1290 / NCIMB 6125 / NCTC 8237 / Type A).